A 68-amino-acid polypeptide reads, in one-letter code: Movement protein TGBp3 (68 aa).

Topologically, residues 1 to 6 (MFSGKE) are lumenal. A helical membrane pass occupies residues 7 to 26 (ITLFALSTLIALIVLNYMSA). The Cytoplasmic segment spans residues 27–68 (TPNPVCLIELTGHSAVLRGNNCESLTSGVIEALSAHLHGLRN).

The protein belongs to the Tymovirales TGBp3 protein family.

It is found in the host endoplasmic reticulum membrane. Functionally, plays a role in viral cell-to-cell propagation, by facilitating genome transport to neighboring plant cells through plasmosdesmata. May induce the formation of granular vesicles derived from the Endoplasmic reticulum, which align on actin filaments. This chain is Movement protein TGBp3, found in Papaya mosaic potexvirus (PMV).